The sequence spans 167 residues: Endoribonuclease YbeY (167 aa).

Zn(2+) contacts are provided by His-126, His-130, and His-136.

Belongs to the endoribonuclease YbeY family. Zn(2+) serves as cofactor.

It is found in the cytoplasm. Single strand-specific metallo-endoribonuclease involved in late-stage 70S ribosome quality control and in maturation of the 3' terminus of the 16S rRNA. In Novosphingobium aromaticivorans (strain ATCC 700278 / DSM 12444 / CCUG 56034 / CIP 105152 / NBRC 16084 / F199), this protein is Endoribonuclease YbeY.